Consider the following 619-residue polypeptide: Chaperone protein HscA homolog (619 aa).

This sequence belongs to the heat shock protein 70 family.

Its function is as follows. Chaperone involved in the maturation of iron-sulfur cluster-containing proteins. Has a low intrinsic ATPase activity which is markedly stimulated by HscB. This Pseudomonas aeruginosa (strain LESB58) protein is Chaperone protein HscA homolog.